The sequence spans 622 residues: Protein lev-9 (622 aa).

Residues 1–16 form the signal peptide; it reads MRFLLLLAISITYASA. The WAP; atypical domain occupies 17 to 61; sequence LSCPEVTLSQRPKHCKKECIADEDCKRNKRCMCDGECGLSCVNPI. 19 disulfide bridges follow: Cys19–Cys49, Cys35–Cys47, Cys41–Cys57, Cys64–Cys105, Cys91–Cys118, Cys124–Cys171, Cys154–Cys188, Cys193–Cys233, Cys219–Cys246, Cys251–Cys291, Cys277–Cys304, Cys309–Cys349, Cys335–Cys362, Cys366–Cys409, Cys395–Cys420, Cys425–Cys467, Cys452–Cys481, Cys486–Cys543, and Cys529–Cys556. Sushi domains lie at 62–120, 122–190, 191–248, 249–306, 307–364, 365–422, 423–483, and 484–558; these read AMCH…VCRL, LKCG…RCKA, RACP…NCKA, TECS…RCEE, IRCS…RCLA, SCRV…VCSP, LSCH…KCLP, and SWCE…KCVS. An N-linked (GlcNAc...) asparagine glycan is attached at Asn411. A propeptide spanning residues 576 to 622 is cleaved from the precursor; it reads SLPGRAVREYVDDELSTHRQHSGKCGIVSGKLERMIMQHSDNGVSVC.

Proteolytic processing of the C-terminus is required for clustering activity but not for secretion nor traffic.

It localises to the synapse. It is found in the secreted. Its function is as follows. Scaffolding protein that is necessary to cluster acetylcholine receptors at neuromuscular junctions. The chain is Protein lev-9 (lev-9) from Caenorhabditis elegans.